A 690-amino-acid chain; its full sequence is MPRQHAIEDYRNFGIMAHIDAGKTTTTERILYYTGKSHKIGEVHEGAATMDWMTQEQERGITITSAATTAFWDGKRLNIIDTPGHVDFTIEVERSLRVLDGAVCVLDSNQGVEPQTETVWRQGDKYKVPRIVFCNKMDKTGADFYKCLADIVDRLGARPVALQLPIGSESNFKGMVDLVRMKALVWNNEALGAMYDIVDIPADLADKAKEYREKLVEAAVELDDDAMAAYLDGAEPDEATLKKLIRKAVLTGAFYPVLCGTAFKNKGVQPLLDAVVAYLPSPLDVPAIKGVDDKGNEVVRHADDKEPMSLLAFKIMDDPFVGTITFCRIYSGILQSGTGVVNSTREKKERIGRMLLMHANNREDIKEAYAGDIVALAGLKEARTGDTLCDPAHQVILEKMEFPDPVIEIAIEPKSKADQEKLGIALAKLAAEDPSFRVSTDQESGQTILKGMGELHLDIKVDILKRTYKVDANIGAPQVAFRERVTKRVEHSYTHKKQTGGTGQFAAVTLIVEPSEPGKGYEFESKIVGGAVPKEYIPGVEKGIESVLSSGVVAGFPVVDVKVQLIDGKFHDVDSSALAFEIATRACFREALQKGKSVLLEPIMKVEVVTPEDYTGSVIGDLNSRRGQIQGQDMRGNANVINAMVPLMNMFGYVNNLRSMSQGRATFTMQFDHYAEAPANVSAEVQKKFA.

The 276-residue stretch at 8–283 (EDYRNFGIMA…AVVAYLPSPL (276 aa)) folds into the tr-type G domain. Residues 17–24 (AHIDAGKT), 81–85 (DTPGH), and 135–138 (NKMD) contribute to the GTP site.

Belongs to the TRAFAC class translation factor GTPase superfamily. Classic translation factor GTPase family. EF-G/EF-2 subfamily.

The protein localises to the cytoplasm. In terms of biological role, catalyzes the GTP-dependent ribosomal translocation step during translation elongation. During this step, the ribosome changes from the pre-translocational (PRE) to the post-translocational (POST) state as the newly formed A-site-bound peptidyl-tRNA and P-site-bound deacylated tRNA move to the P and E sites, respectively. Catalyzes the coordinated movement of the two tRNA molecules, the mRNA and conformational changes in the ribosome. In Nitrobacter winogradskyi (strain ATCC 25391 / DSM 10237 / CIP 104748 / NCIMB 11846 / Nb-255), this protein is Elongation factor G.